We begin with the raw amino-acid sequence, 590 residues long: 2-isopropylmalate synthase (590 aa).

The Pyruvate carboxyltransferase domain occupies 40 to 314 (PRWCAVDLRD…DPQIDFSDID (275 aa)). Mg(2+) contacts are provided by Asp49, His253, His255, and Asn289. The interval 456-590 (APETESDAKW…SSVPAELAGV (135 aa)) is regulatory domain.

This sequence belongs to the alpha-IPM synthase/homocitrate synthase family. LeuA type 2 subfamily. As to quaternary structure, homodimer. Requires Mg(2+) as cofactor.

It localises to the cytoplasm. It carries out the reaction 3-methyl-2-oxobutanoate + acetyl-CoA + H2O = (2S)-2-isopropylmalate + CoA + H(+). It participates in amino-acid biosynthesis; L-leucine biosynthesis; L-leucine from 3-methyl-2-oxobutanoate: step 1/4. Catalyzes the condensation of the acetyl group of acetyl-CoA with 3-methyl-2-oxobutanoate (2-ketoisovalerate) to form 3-carboxy-3-hydroxy-4-methylpentanoate (2-isopropylmalate). This is 2-isopropylmalate synthase from Leifsonia xyli subsp. xyli (strain CTCB07).